The sequence spans 106 residues: uncharacterized protein (106 aa).

This is an uncharacterized protein from Rickettsia prowazekii (strain Madrid E).